We begin with the raw amino-acid sequence, 260 residues long: Thrombin-like enzyme gloshedobin (260 aa).

The N-terminal stretch at 1-18 (MVLIRVQANLLILQLSYA) is a signal peptide. The propeptide occupies 19–24 (QKSSEL). The Peptidase S1 domain maps to 25 to 252 (IIGGDECNIN…TEWIQSIIAG (228 aa)). 6 disulfide bridges follow: Cys31/Cys165, Cys52/Cys68, Cys100/Cys258, Cys144/Cys212, Cys176/Cys191, and Cys202/Cys227. Active-site charge relay system residues include His67 and Asp112. N-linked (GlcNAc...) asparagine glycosylation is found at Asn123 and Asn124. Catalysis depends on Ser206, which acts as the Charge relay system.

It belongs to the peptidase S1 family. Snake venom subfamily. As to quaternary structure, monomer. As to expression, expressed by the venom gland.

The protein localises to the secreted. With respect to regulation, completely inhibited by PMSF, and N-tosyl-Lphenylalanine chloromethyl ketone (TPCK) and poorly inhibited by benzamidine and derivates. Not inhibited by EDTA, heparin and hirudin. Thrombin-like snake venom serine protease. The recombinant form clots fibrinogen by cleaving fibrinogen Aalpha chain (FGA), and slowly Bbeta chain (FGB). Has amidolytic activities. The protein is Thrombin-like enzyme gloshedobin of Gloydius shedaoensis (Shedao island pit viper).